The sequence spans 187 residues: Putative protein YbeM (187 aa).

In terms of domain architecture, CN hydrolase spans 1–163 (MMTTILTIHV…PALIMAEVTP (163 aa)).

The protein belongs to the carbon-nitrogen hydrolase superfamily. NIT1/NIT2 family.

Pseudogene resulting from a nucleotide deletion that introduces a premature stop codon at position 66. This is the C-terminal fragment. The intact protein (AC A0A140NCB4) hydrolyzes deaminated glutathione (dGSH, 2-oxoglutaramate) to alpha-ketoglutarate (alpha-KG) and cysteinylglycine, has less activity against alpha-ketoglutaramate (a-KGM) and no activity on glutathione or L-glutamine. May function as a metabolite repair enzyme. The polypeptide is Putative protein YbeM (ybeM) (Escherichia coli (strain K12)).